We begin with the raw amino-acid sequence, 303 residues long: BAG family molecular chaperone regulator 3 (303 aa).

The span at 1 to 11 (MMKMNTGTSPS) shows a compositional bias: polar residues. The disordered stretch occupies residues 1 to 27 (MMKMNTGTSPSVIGGGTSGNEWESRPG). A Ubiquitin-like domain is found at 45-119 (FRVRVKYGSV…LVVKEDPISQ (75 aa)). The BAG domain maps to 138–216 (SISDISFEVD…KYVEALDLLK (79 aa)). The tract at residues 249–268 (VEEEEEEPRNSNASSSSGTP) is disordered. The segment covering 258-267 (NSNASSSSGT) has biased composition (polar residues). Serine 263 bears the Phosphoserine mark.

In terms of assembly, binds to the ATPase domain of HSP70/HSC70 chaperones. Interacts with HSP70-1.

Co-chaperone that regulates diverse cellular pathways, such as programmed cell death and stress responses. This is BAG family molecular chaperone regulator 3 (BAG3) from Arabidopsis thaliana (Mouse-ear cress).